The chain runs to 387 residues: tRNA N6-adenosine threonylcarbamoyltransferase (387 aa).

Fe cation-binding residues include His112 and His116. Residues 134 to 138 (LASGG), Asp167, Gly180, and Asn325 contribute to the substrate site. Residue Asp353 participates in Fe cation binding.

The protein belongs to the KAE1 / TsaD family. Requires Fe(2+) as cofactor.

It localises to the cytoplasm. It carries out the reaction L-threonylcarbamoyladenylate + adenosine(37) in tRNA = N(6)-L-threonylcarbamoyladenosine(37) in tRNA + AMP + H(+). Its function is as follows. Required for the formation of a threonylcarbamoyl group on adenosine at position 37 (t(6)A37) in tRNAs that read codons beginning with adenine. Is involved in the transfer of the threonylcarbamoyl moiety of threonylcarbamoyl-AMP (TC-AMP) to the N6 group of A37, together with TsaE and TsaB. TsaD likely plays a direct catalytic role in this reaction. This is tRNA N6-adenosine threonylcarbamoyltransferase from Rickettsia typhi (strain ATCC VR-144 / Wilmington).